A 130-amino-acid chain; its full sequence is MAKPTRGGQKKKVRRNVPSGVAHIQSTFNNTIVTIADTVGDVISWASAGSSGFKGAKKGTPFAAQQAAESAGRRAIDSGMRQCEVMVSGPGAGRETAIRALQAVGLEITLIRDVTPIPHNGCRPPKRRRV.

This sequence belongs to the universal ribosomal protein uS11 family. As to quaternary structure, part of the 30S ribosomal subunit. Interacts with proteins S7 and S18. Binds to IF-3.

Functionally, located on the platform of the 30S subunit, it bridges several disparate RNA helices of the 16S rRNA. Forms part of the Shine-Dalgarno cleft in the 70S ribosome. The sequence is that of Small ribosomal subunit protein uS11 from Gloeobacter violaceus (strain ATCC 29082 / PCC 7421).